The sequence spans 300 residues: Ribonuclease HIII (300 aa).

In terms of domain architecture, RNase H type-2 spans isoleucine 83–lysine 300. 3 residues coordinate a divalent metal cation: aspartate 89, glutamate 90, and aspartate 194.

The protein belongs to the RNase HII family. RnhC subfamily. Mn(2+) serves as cofactor. The cofactor is Mg(2+).

Its subcellular location is the cytoplasm. The catalysed reaction is Endonucleolytic cleavage to 5'-phosphomonoester.. Functionally, endonuclease that specifically degrades the RNA of RNA-DNA hybrids. In Streptococcus pyogenes serotype M4 (strain MGAS10750), this protein is Ribonuclease HIII.